Reading from the N-terminus, the 282-residue chain is Leucine-rich protein (282 aa).

Functionally, not essential for viability or growth. Nevertheless, uncontrolled production in E.coli is detrimental to the normal physiology of the bacteria. This Streptococcus dysgalactiae subsp. equisimilis (Streptococcus equisimilis) protein is Leucine-rich protein (lrp).